Here is a 390-residue protein sequence, read N- to C-terminus: Aspergillopepsin-1 (390 aa).

Positions 1 to 19 (MVNTSLLAALTAYAVAVAA) are cleaved as a signal peptide. The propeptide at 20 to 67 (APTAPQVKGFSVNQVAVPKGVYRHPAAQLAKAYGKYHATVPTQVAAAA) is activation peptide. Residues 84–387 (YITQVTVGDD…DASGPRLGFA (304 aa)) enclose the Peptidase A1 domain. Catalysis depends on residues D100 and D281.

Belongs to the peptidase A1 family. Monomer.

Its subcellular location is the secreted. It carries out the reaction Hydrolysis of proteins with broad specificity. Generally favors hydrophobic residues in P1 and P1', but also accepts Lys in P1, which leads to activation of trypsinogen. Does not clot milk.. Its activity is regulated as follows. Inhibited by the microbial peptide pepstatin A. Secreted aspartic endopeptidase that allows assimilation of proteinaceous substrates. The scissile peptide bond is attacked by a nucleophilic water molecule activated by two aspartic residues in the active site. Shows a broad primary substrate specificity. Favors hydrophobic residues at the P1 and P1' positions, but also accepts a lysine residue in the P1 position, leading to the activation of trypsinogen and chymotrypsinogen A. Hydrolyzes myoglobin, hemoglobin and other natural proteins. Hydrolyzes equine myoglobin between positions 'Met-1' and 'Gly-2', 'Lys-43' and 'Phe-44', and 'Leu-70' and 'Thr-71'. This Aspergillus pseudoglaucus (Eurotium repens) protein is Aspergillopepsin-1 (pepA).